The chain runs to 459 residues: Serine protease HTRA3 (459 aa).

Positions 1–23 (MQARALLPATLAILATLAVLALA) are cleaved as a signal peptide. In terms of domain architecture, IGFBP N-terminal spans 27-90 (PAAPCPARCD…ECVRGVCRCR (64 aa)). Disulfide bonds link Cys-31-Cys-54, Cys-35-Cys-56, Cys-40-Cys-57, Cys-45-Cys-60, Cys-68-Cys-82, Cys-76-Cys-87, Cys-89-Cys-107, and Cys-96-Cys-132. Residues 76–134 (CGDSLECVRGVCRCRWTHTVCGTDGHTYADVCALQAASRRALQVSGTPVRQLQKGACPS) enclose the Kazal-like domain. A serine protease region spans residues 181–347 (GSGFIMSEAG…IPSDRITRFL (167 aa)). Residues His-197, Asp-233, and Ser-311 each act as charge relay system in the active site. A PDZ domain is found at 365 to 450 (IRMRTITPSL…EVRRGNDDLL (86 aa)).

It belongs to the peptidase S1C family. Homotrimer. Interacts with MYH9. Interacts with TGFB1; the interaction inhibits TGFB-mediated signaling. Interacts with BMP4; the interaction inhibits BMP4-mediated signaling. Interacts with TGFB2 and GDF5. In terms of tissue distribution, highest level of isoform 1 in maternal part of the placenta, moderate level in heart, testis and ovary, low level in muscle and lung. High expression found in granulosa cells of the ovary. Expressed in bone matrix, particularly in articular chondrocytes. Very low level of isoform 2 expressed in placenta. Expressed in the bone matrix, particularly in articular chondrocytes.

The protein localises to the secreted. Serine protease that cleaves beta-casein/CSN2 as well as several extracellular matrix (ECM) proteoglycans such as decorin/DCN, biglycan/BGN and fibronectin/FN1. Inhibits signaling mediated by TGF-beta family proteins possibly indirectly by degradation of these ECM proteoglycans. May act as a tumor suppressor. Negatively regulates, in vitro, trophoblast invasion during placental development and may be involved in the development of the placenta in vivo. May also have a role in ovarian development, granulosa cell differentiation and luteinization. This Mus musculus (Mouse) protein is Serine protease HTRA3 (Htra3).